The primary structure comprises 540 residues: Probable tubulin polyglutamylase TTLL2 (540 aa).

Residues 41–384 (LKPLVFRVDE…NGLRSEEKKC (344 aa)) enclose the TTL domain. ATP is bound by residues Lys-169, 175–176 (RG), 197–200 (QKYI), and 210–212 (KCD). An a protein-binding site is contributed by Arg-175. Arg-236 contacts L-glutamate. 255–256 (TN) is an ATP binding site. Positions 258 and 278 each coordinate L-glutamate. Asp-330, Glu-343, and Asn-345 together coordinate Mg(2+). Lys-361 is an L-glutamate binding site. The interval 479–499 (SQSQPHKMKGPAGDLPEAGST) is disordered.

Belongs to the tubulin--tyrosine ligase family. The cofactor is Mg(2+). In terms of tissue distribution, highly expressed in brain, kidney, liver and testis. Expressed in heart, lung, muscle and spleen.

Its function is as follows. Probable tubulin polyglutamylase that generates side chains of glutamate on the gamma-carboxyl group of specific glutamate residues within the C-terminal tail of target proteins. Similar to TTLL1, may acquire enzymatic activity only in complex with other proteins as it is most likely lacking domains important for autonomous activity. Probably involved in the side-chain initiation step of the polyglutamylation reaction rather than the elongation step. This chain is Probable tubulin polyglutamylase TTLL2, found in Mus musculus (Mouse).